The sequence spans 265 residues: Type II pantothenate kinase (265 aa).

Residue 6–13 coordinates ATP; sequence DAGGTLIK. Glutamate 70 acts as the Proton acceptor in catalysis. ATP contacts are provided by residues threonine 99, 121–125, tyrosine 137, and serine 225; that span reads GGMIQ.

Belongs to the type II pantothenate kinase family. Homodimer.

The protein resides in the cytoplasm. The catalysed reaction is (R)-pantothenate + ATP = (R)-4'-phosphopantothenate + ADP + H(+). Its pathway is cofactor biosynthesis; coenzyme A biosynthesis; CoA from (R)-pantothenate: step 1/5. Catalyzes the phosphorylation of pantothenate (Pan), the first step in CoA biosynthesis. In Staphylococcus saprophyticus subsp. saprophyticus (strain ATCC 15305 / DSM 20229 / NCIMB 8711 / NCTC 7292 / S-41), this protein is Type II pantothenate kinase.